The primary structure comprises 266 residues: MDTFQVIILALIQGLTEFLPISSSAHLILPAQLLGWEDQGLSFDVAVNTGSLLAVVMYFRREILSMFTAWTGSVVSRKQTDESKLAWWIILATIPAVIIGFSAKDFIETHFRSIEVIAATTIIFGLLLWWADKMQRQGLNEFQVGWKKALVIGIAQAMALIPGTSRSGATITAALMLGLSREAAARFSFLMSVPVSLGAAILVTKDLLSSGQVIDYQALGLGILVSFIAAYICIHYFLKIISKMGMTPFVIYRLALGAVLCWIIFL.

The next 8 membrane-spanning stretches (helical) occupy residues 1-21, 39-59, 87-107, 111-131, 144-164, 183-203, 218-238, and 246-266; these read MDTFQVIILALIQGLTEFLPI, QGLSFDVAVNTGSLLAVVMYF, WWIILATIPAVIIGFSAKDFI, FRSIEVIAATTIIFGLLLWWA, VGWKKALVIGIAQAMALIPGT, AAARFSFLMSVPVSLGAAILV, ALGLGILVSFIAAYICIHYFL, and MTPFVIYRLALGAVLCWIIFL.

It belongs to the UppP family.

Its subcellular location is the cell inner membrane. It carries out the reaction di-trans,octa-cis-undecaprenyl diphosphate + H2O = di-trans,octa-cis-undecaprenyl phosphate + phosphate + H(+). In terms of biological role, catalyzes the dephosphorylation of undecaprenyl diphosphate (UPP). Confers resistance to bacitracin. This chain is Undecaprenyl-diphosphatase, found in Shewanella pealeana (strain ATCC 700345 / ANG-SQ1).